A 136-amino-acid chain; its full sequence is Small ribosomal subunit protein bS6 (136 aa).

A disordered region spans residues 96-136 (VTEPSALARSGSDAEADRAPADEGSVEAAGAEPGSEAEAEA).

The protein belongs to the bacterial ribosomal protein bS6 family.

Functionally, binds together with bS18 to 16S ribosomal RNA. The chain is Small ribosomal subunit protein bS6 from Methylococcus capsulatus (strain ATCC 33009 / NCIMB 11132 / Bath).